We begin with the raw amino-acid sequence, 405 residues long: FAD-dependent monooxygenase thnD (405 aa).

Residues Glu30, Ala45, Arg106, Asp308, and Gly321 each contribute to the FAD site.

Belongs to the paxM FAD-dependent monooxygenase family. It depends on FAD as a cofactor.

Functionally, FAD-dependent monooxygenase; part of the gene cluster that produces the tetronate natural products trihazones. Transcription analysis of thnD confirmed this gene is expressed, hence its role in the biosynthetic pathway remains cryptic. The pathway begins with the formation of trihazone A by the hybrid PKS-NRPS synthetase thnA and the trans-enoyl reductase thnE. Trihazone A is further decarboxylated by the 2-oxoglutarate-dependent dioxygenase thnC to produce trihazone D. The function of the FAD-dependent monooxygenase thnD has still to be identified. The protein is FAD-dependent monooxygenase thnD of Trichoderma harzianum (Hypocrea lixii).